We begin with the raw amino-acid sequence, 1033 residues long: uncharacterized protein (1033 aa).

Coiled coils occupy residues 212–326, 405–582, 615–771, and 797–1019; these read EIFK…KMNN, ILNN…LYKF, LEKE…LKLN, and KMKI…NIDN.

This is an uncharacterized protein from Plasmodium falciparum (isolate 3D7).